The following is a 357-amino-acid chain: D-alanine--D-alanine ligase (357 aa).

Residues 134-339 (KQLFEHRGLP…YPDLIAKLID (206 aa)) enclose the ATP-grasp domain. 167-222 (NDKLTYPVFVKPANLGSSVGISKCNNEEELKSGITEAFQFDRKLVIEQGINAREIE) is an ATP binding site. Asp293, Glu306, and Asn308 together coordinate Mg(2+).

The protein belongs to the D-alanine--D-alanine ligase family. It depends on Mg(2+) as a cofactor. Mn(2+) serves as cofactor.

Its subcellular location is the cytoplasm. The enzyme catalyses 2 D-alanine + ATP = D-alanyl-D-alanine + ADP + phosphate + H(+). Its pathway is cell wall biogenesis; peptidoglycan biosynthesis. Cell wall formation. The protein is D-alanine--D-alanine ligase of Staphylococcus epidermidis (strain ATCC 12228 / FDA PCI 1200).